The sequence spans 510 residues: Probable gamma-aminobutyrate transaminase 3, mitochondrial (510 aa).

Residues 1 to 41 (MICRSLLLLRSNAASKASSIVKHVAATGCLPEYSSEAPARY) constitute a mitochondrion transit peptide. 166–167 (GS) provides a ligand contact to pyridoxal 5'-phosphate. Tyrosine 199 serves as a coordination point for substrate. Aspartate 306 serves as a coordination point for pyridoxal 5'-phosphate. Substrate is bound at residue lysine 335. Lysine 335 bears the N6-(pyridoxal phosphate)lysine mark.

It belongs to the class-III pyridoxal-phosphate-dependent aminotransferase family.

The protein resides in the mitochondrion. The catalysed reaction is 4-aminobutanoate + pyruvate = succinate semialdehyde + L-alanine. It carries out the reaction 4-aminobutanoate + glyoxylate = succinate semialdehyde + glycine. Transaminase that degrades gamma-amino butyric acid (GABA). In Oryza sativa subsp. indica (Rice), this protein is Probable gamma-aminobutyrate transaminase 3, mitochondrial.